The following is a 323-amino-acid chain: tRNA U34 carboxymethyltransferase (323 aa).

Residues K91, W105, K110, G130, 152-154 (DPT), 181-182 (IE), M196, Y200, and R315 contribute to the carboxy-S-adenosyl-L-methionine site.

The protein belongs to the class I-like SAM-binding methyltransferase superfamily. CmoB family. In terms of assembly, homotetramer.

The enzyme catalyses carboxy-S-adenosyl-L-methionine + 5-hydroxyuridine(34) in tRNA = 5-carboxymethoxyuridine(34) in tRNA + S-adenosyl-L-homocysteine + H(+). Functionally, catalyzes carboxymethyl transfer from carboxy-S-adenosyl-L-methionine (Cx-SAM) to 5-hydroxyuridine (ho5U) to form 5-carboxymethoxyuridine (cmo5U) at position 34 in tRNAs. The protein is tRNA U34 carboxymethyltransferase of Salmonella enteritidis PT4 (strain P125109).